Here is a 128-residue protein sequence, read N- to C-terminus: Aspartate 1-decarboxylase (128 aa).

The active-site Schiff-base intermediate with substrate; via pyruvic acid is the Ser-25. Ser-25 is modified (pyruvic acid (Ser)). Thr-57 serves as a coordination point for substrate. The active-site Proton donor is the Tyr-58. 73–75 (GSA) contributes to the substrate binding site.

This sequence belongs to the PanD family. In terms of assembly, heterooctamer of four alpha and four beta subunits. The cofactor is pyruvate. Post-translationally, is synthesized initially as an inactive proenzyme, which is activated by self-cleavage at a specific serine bond to produce a beta-subunit with a hydroxyl group at its C-terminus and an alpha-subunit with a pyruvoyl group at its N-terminus.

It is found in the cytoplasm. It carries out the reaction L-aspartate + H(+) = beta-alanine + CO2. Its pathway is cofactor biosynthesis; (R)-pantothenate biosynthesis; beta-alanine from L-aspartate: step 1/1. Functionally, catalyzes the pyruvoyl-dependent decarboxylation of aspartate to produce beta-alanine. This Burkholderia cenocepacia (strain HI2424) protein is Aspartate 1-decarboxylase.